We begin with the raw amino-acid sequence, 475 residues long: Aspartic proteinase 39 (475 aa).

The first 23 residues, 1 to 23 (MELRRKLCIVVAVFVIVIEFASA), serve as a signal peptide directing secretion. The region spanning 74–422 (YFTKIKLGSP…DLDNEVIGWA (349 aa)) is the Peptidase A1 domain. D92 is an active-site residue. Residues N124 and N222 are each glycosylated (N-linked (GlcNAc...) asparagine). D303 is a catalytic residue. N-linked (GlcNAc...) asparagine glycosylation is found at N425 and N446. The GPI-anchor amidated serine moiety is linked to residue S449. A propeptide spans 450 to 475 (APRLLMITKLLTILSPLIVMAFTSLA) (removed in mature form).

The protein belongs to the peptidase A1 family. In terms of tissue distribution, highly expressed in pollen and pollen tubes. Mostly expressed in inflorescence, flowers and siliques, and barely in leaves and seedlings.

The protein resides in the cell membrane. It localises to the cytoplasm. Its subcellular location is the cytosol. In terms of biological role, displays aspartic proteolytic activity. Together with A36, contributes to pollen and ovule development, including the apical cell wall constitution of the growing pollen tubes. In Arabidopsis thaliana (Mouse-ear cress), this protein is Aspartic proteinase 39.